A 344-amino-acid polypeptide reads, in one-letter code: Heat-inducible transcription repressor HrcA (344 aa).

The protein belongs to the HrcA family.

Functionally, negative regulator of class I heat shock genes (grpE-dnaK-dnaJ and groELS operons). Prevents heat-shock induction of these operons. The chain is Heat-inducible transcription repressor HrcA from Streptococcus pneumoniae (strain ATCC 700669 / Spain 23F-1).